Consider the following 354-residue polypeptide: mRNA cap guanine-N(7) methyltransferase 2 (354 aa).

The 279-residue stretch at 8–286 (KPEQSHHRLF…LYATFIFQKP (279 aa)) folds into the mRNA cap 0 methyltransferase domain. S-adenosyl-L-methionine-binding positions include lysine 21, aspartate 61, and 88–89 (DP).

This sequence belongs to the class I-like SAM-binding methyltransferase superfamily. mRNA cap 0 methyltransferase family.

Its subcellular location is the nucleus. The catalysed reaction is a 5'-end (5'-triphosphoguanosine)-ribonucleoside in mRNA + S-adenosyl-L-methionine = a 5'-end (N(7)-methyl 5'-triphosphoguanosine)-ribonucleoside in mRNA + S-adenosyl-L-homocysteine. MRNA capping methyltransferase that methylates the N7 position of the added guanosine to the 5'-cap structure of mRNAs. Binds RNA containing 5'-terminal GpppC. The sequence is that of mRNA cap guanine-N(7) methyltransferase 2 from Arabidopsis thaliana (Mouse-ear cress).